A 539-amino-acid chain; its full sequence is Eukaryotic translation initiation factor 3 subunit L (539 aa).

Residues 306–514 enclose the PCI domain; sequence TFSDILLYIQ…IHIADTKVSH (209 aa).

It belongs to the eIF-3 subunit L family. Component of the eukaryotic translation initiation factor 3 (eIF-3) complex. The eIF-3 complex interacts with pix.

It is found in the cytoplasm. Functionally, component of the eukaryotic translation initiation factor 3 (eIF-3) complex, which is involved in protein synthesis of a specialized repertoire of mRNAs and, together with other initiation factors, stimulates binding of mRNA and methionyl-tRNAi to the 40S ribosome. The eIF-3 complex specifically targets and initiates translation of a subset of mRNAs involved in cell proliferation. This Drosophila sechellia (Fruit fly) protein is Eukaryotic translation initiation factor 3 subunit L.